Here is a 960-residue protein sequence, read N- to C-terminus: MSDLETVAKFLAESVIASTAKTSERNLRQLETQDGFGLTLLHVIASTNLPLSTRLAGALFFKNFIKRKWVDENGNHLLPANNVELIKKEIVPLMISLPNNLQVQIGEAISSIADSDFPDRWPTLLSDLASRLSNDDMVTNKGVLTVAHSIFKRWRPLFRSDELFLEIKLVLDVFTAPFLNLLKTVDEQITANENNKASLNILFDVLLVLIKLYYDFNCQDIPEFFEDNIQVGMGIFHKYLSYSNPLLEDPDETEHASVLIKVKSSIQELVQLYTTRYEDVFGPMINEFIQITWNLLTSISNQPKYDILVSKSLSFLTAVTRIPKYFEIFNNESAMNNITEQIILPNVTLREEDVELFEDDPIEYIRRDLEGSDTDTRRRACTDFLKELKEKNEVLVTNIFLAHMKGFVDQYMSDPSKNWKFKDLYIYLFTALAINGNITNAGVSSTNNLLNVVDFFTKEIAPDLTSNNIPHIILRVDAIKYIYTFRNQLTKAQLIELMPILATFLQTDEYVVYTYAAITIEKILTIRESNTSPAFIFHKEDISNSTEILLKNLIALILKHGSSPEKLAENEFLMRSIFRVLQTSEDSIQPLFPQLLAQFIEIVTIMAKNPSNPRFTHYTFESIGAILNYTQRQNLPLLVDSMMPTFLTVFSEDIQEFIPYVFQIIAFVVEQSATIPESIKPLAQPLLAPNVWELKGNIPAVTRLLKSFIKTDSSIFPDLVPVLGIFQRLIASKAYEVHGFDLLEHIMLLIDMNRLRPYIKQIAVLLLQRLQNSKTERYVKKLTVFFGLISNKLGSDFLIHFIDEVQDGLFQQIWGNFIITTLPTIGNLLDRKIALIGVLNMVINGQFFQSKYPTLISSTMNSIIETASSQSIANLKNDYVDLDNLEEISTFGSHFSKLVSISEKPFDPLPEIDVNNGVRLYVAEALNKYNAISGNTFLNTILPQLTQENQVKLNQLLVGN.

HEAT repeat units lie at residues 1 to 33, 34 to 73, 74 to 120, 121 to 157, 158 to 220, 221 to 278, 279 to 323, 324 to 392, 393 to 445, 446 to 489, 490 to 528, 529 to 586, 587 to 630, 631 to 674, 675 to 716, 717 to 751, 752 to 794, and 795 to 826; these read MSDL…LETQ, DGFG…VDEN, GNHL…FPDR, WPTL…WRPL, FRSD…NCQD, IPEF…TRYE, DVFG…TRIP, KYFE…KEKN, EVLV…GVSS, TNNL…RNQL, TKAQ…TIRE, SNTS…TSED, SIQP…LNYT, QRQN…QSAT, IPES…SSIF, PDLV…LLID, MNRL…NKLG, and SDFL…PTIG. In terms of domain architecture, Importin N-terminal spans 23-96; that stretch reads SERNLRQLET…KKEIVPLMIS (74 aa). The Nuclear localization signal signature appears at 366–381; that stretch reads RRDLEGSDTDTRRRAC. The stretch at 827–928 is one HEAT 19; with insert repeat; the sequence is NLLDRKIALI…RLYVAEALNK (102 aa). An HEAT 20 repeat occupies 929-960; that stretch reads YNAISGNTFLNTILPQLTQENQVKLNQLLVGN.

This sequence belongs to the XPO2/CSE1 family. Binds with high affinity to SRP1 only in the presence of RanGTP. The complex is dissociated by the RanGTP-binding protein YRB1.

The protein resides in the cytoplasm. Its subcellular location is the nucleus. Functionally, export receptor for importin alpha (SRP1). Mediates importin-alpha re-export from the nucleus to the cytoplasm after import substrates have been released into the nucleoplasm. This chain is Importin alpha re-exporter (CSE1), found in Saccharomyces cerevisiae (strain ATCC 204508 / S288c) (Baker's yeast).